Reading from the N-terminus, the 786-residue chain is MNRTAPMKQRSVPLSSIMPSEEQSDGFIDLDRLVAAVFRRARLVAAFVVLFIALGAAYLLFATPYYTSMTQILLDENLSKYAEEEPTPVNSQMLDTQIASAVEILKSGELALRVVDKLKLSENDTILNPPRSPVDMVKEWLKTATGLFSGGPDVTEEAARNGRRQKAAAIIQQSLAVERVSRSSVVAVAFRSSDPLLAATIARGYASAYLTDQLNANFEATERASVWLQERLTDLQQRSQAAALEVAHFRAENGLTAARGELMSEQQMADLNSQLIVAQADTASASARYDQYKSIVDQGPENAVKNATISSKEGDNSVIRDLRTRYLTVGKREREVSDNFGADHPQAVSLRAEQEDVARQIYQELQQLTASYKNEYEVAQSREESLRKSIQGIAGKTSDASEQLVQLRELEQKAAALKTLYESYLGRYEQATQQQSFPIAKARVISEAGVPVSPSSPKKTMTLALSAVLGMMVGGAYAAFLEFRERTFRLEGNIRSILGHRSLGYVPLLGTRMKKKAQLVHAHFGSVKRHDEAVDDTMPFQRLSRIVVDAPRSTFAETFRNAKLACDQMLAGSESRVIAIASALPDEGKSIIAANFAALLAASGKRTLLIDADIRKPGLTQMITPAPRTGLVETLIGEASWPAGIKVDQRTKLAILPAGGASHQRHQSNELLASPAMANLIENARNAFDYVVVDLAALAPVVDAKAFAPLADGILFVVEWGRTPSRLVRDLLHSEPLINSKVLGVILNKTDMNELGKYSDFDGAEKYRHRYGKYYVENTITENTAA.

At Met-1–Arg-42 the chain is on the cytoplasmic side. A helical transmembrane segment spans residues Leu-43–Tyr-66. Over Thr-67–Asp-689 the chain is Periplasmic. Ala-583–Ser-590 provides a ligand contact to ATP. A helical membrane pass occupies residues Tyr-690 to Ala-711. The Cytoplasmic segment spans residues Asp-712–Ala-786.

It to B.solanacearum EpsB.

Its subcellular location is the cell membrane. Its pathway is glycan metabolism; exopolysaccharide biosynthesis. The sequence is that of Succinoglycan biosynthesis transport protein ExoP (exoP) from Rhizobium meliloti (strain 1021) (Ensifer meliloti).